The chain runs to 184 residues: Nucleoside triphosphate pyrophosphatase (184 aa).

Asp66 functions as the Proton acceptor in the catalytic mechanism.

The protein belongs to the Maf family. It depends on a divalent metal cation as a cofactor.

It localises to the cytoplasm. It catalyses the reaction a ribonucleoside 5'-triphosphate + H2O = a ribonucleoside 5'-phosphate + diphosphate + H(+). The enzyme catalyses a 2'-deoxyribonucleoside 5'-triphosphate + H2O = a 2'-deoxyribonucleoside 5'-phosphate + diphosphate + H(+). Functionally, nucleoside triphosphate pyrophosphatase. May have a dual role in cell division arrest and in preventing the incorporation of modified nucleotides into cellular nucleic acids. This Prochlorococcus marinus (strain MIT 9313) protein is Nucleoside triphosphate pyrophosphatase.